Reading from the N-terminus, the 180-residue chain is ATP synthase subunit delta (180 aa).

This sequence belongs to the ATPase delta chain family. F-type ATPases have 2 components, F(1) - the catalytic core - and F(0) - the membrane proton channel. F(1) has five subunits: alpha(3), beta(3), gamma(1), delta(1), epsilon(1). F(0) has three main subunits: a(1), b(2) and c(10-14). The alpha and beta chains form an alternating ring which encloses part of the gamma chain. F(1) is attached to F(0) by a central stalk formed by the gamma and epsilon chains, while a peripheral stalk is formed by the delta and b chains.

The protein resides in the cell membrane. Functionally, f(1)F(0) ATP synthase produces ATP from ADP in the presence of a proton or sodium gradient. F-type ATPases consist of two structural domains, F(1) containing the extramembraneous catalytic core and F(0) containing the membrane proton channel, linked together by a central stalk and a peripheral stalk. During catalysis, ATP synthesis in the catalytic domain of F(1) is coupled via a rotary mechanism of the central stalk subunits to proton translocation. In terms of biological role, this protein is part of the stalk that links CF(0) to CF(1). It either transmits conformational changes from CF(0) to CF(1) or is implicated in proton conduction. The polypeptide is ATP synthase subunit delta (Leuconostoc mesenteroides subsp. mesenteroides (strain ATCC 8293 / DSM 20343 / BCRC 11652 / CCM 1803 / JCM 6124 / NCDO 523 / NBRC 100496 / NCIMB 8023 / NCTC 12954 / NRRL B-1118 / 37Y)).